A 181-amino-acid chain; its full sequence is Large ribosomal subunit protein uL5 (181 aa).

It belongs to the universal ribosomal protein uL5 family. In terms of assembly, part of the 50S ribosomal subunit; part of the 5S rRNA/L5/L18/L25 subcomplex. Contacts the 5S rRNA and the P site tRNA. Forms a bridge to the 30S subunit in the 70S ribosome.

This is one of the proteins that bind and probably mediate the attachment of the 5S RNA into the large ribosomal subunit, where it forms part of the central protuberance. In the 70S ribosome it contacts protein S13 of the 30S subunit (bridge B1b), connecting the 2 subunits; this bridge is implicated in subunit movement. Contacts the P site tRNA; the 5S rRNA and some of its associated proteins might help stabilize positioning of ribosome-bound tRNAs. The chain is Large ribosomal subunit protein uL5 from Helicobacter pylori (strain HPAG1).